We begin with the raw amino-acid sequence, 68 residues long: Conotoxin ba14a (68 aa).

The signal sequence occupies residues 1–20 (MKLSVMFIVALVLSLSMTDG). Positions 21–50 (LPRRAENGGRIFRQHSPDSMDPQTRQIKTR) are excised as a propeptide.

Contains 2 disulfide bonds. Expressed by the venom duct.

The protein resides in the secreted. The sequence is that of Conotoxin ba14a from Conus bayani (Bayan's cone).